Reading from the N-terminus, the 201-residue chain is Zinc finger protein 239 (201 aa).

C2H2-type zinc fingers lie at residues 6-28, 34-56, 62-84, 90-112, 118-140, 146-168, and 174-196; these read YKCD…HSVH, FKCD…KRVH, YACE…QRVH, YKCG…RCTH, YQCY…LRVH, YHCG…QRVH, and YECS…QRVH.

This sequence belongs to the krueppel C2H2-type zinc-finger protein family. As to expression, preferentially expressed in transformed mouse cells.

It localises to the nucleus. In terms of biological role, may be involved in transcriptional regulation. The sequence is that of Zinc finger protein 239 (Znf239) from Mus musculus (Mouse).